The following is a 103-amino-acid chain: Large ribosomal subunit protein bL21 (103 aa).

It belongs to the bacterial ribosomal protein bL21 family. Part of the 50S ribosomal subunit. Contacts protein L20.

In terms of biological role, this protein binds to 23S rRNA in the presence of protein L20. This is Large ribosomal subunit protein bL21 from Actinobacillus pleuropneumoniae serotype 5b (strain L20).